An 89-amino-acid polypeptide reads, in one-letter code: UPF0250 protein Bphy_0213 (89 aa).

It belongs to the UPF0250 family.

The protein is UPF0250 protein Bphy_0213 of Paraburkholderia phymatum (strain DSM 17167 / CIP 108236 / LMG 21445 / STM815) (Burkholderia phymatum).